Here is a 592-residue protein sequence, read N- to C-terminus: Autophagy-related protein 22-1 (592 aa).

Helical transmembrane passes span 31 to 51, 108 to 128, 143 to 163, and 167 to 187; these read YGWA…PITL, TASF…VIII, LLIV…VVVP, and LLGG…FVLL. An N-linked (GlcNAc...) asparagine glycan is attached at N213. 8 consecutive transmembrane segments (helical) span residues 271–291, 301–321, 364–384, 398–418, 433–453, 468–490, 502–524, and 534–554; these read IGIG…VVVV, LVLF…SLWL, IVIF…VSGT, AALG…AFSW, IIAC…GFIP, MYPL…RSFF, FYAL…VGAI, and AFVF…LVDV. The tract at residues 572-592 is disordered; sequence PQGSEYGAISDDQTTEDPIEE.

Belongs to the ATG22 family.

It is found in the vacuole membrane. Its function is as follows. Vacuolar effluxer which mediate the efflux of amino acids resulting from autophagic degradation. The release of autophagic amino acids allows the maintenance of protein synthesis and viability during nitrogen starvation. The chain is Autophagy-related protein 22-1 (atg22-1) from Penicillium rubens (strain ATCC 28089 / DSM 1075 / NRRL 1951 / Wisconsin 54-1255) (Penicillium chrysogenum).